We begin with the raw amino-acid sequence, 231 residues long: Probable transglycosylase SceD (231 aa).

Residues M1–A27 form the signal peptide. Positions A103–E116 are enriched in polar residues. The tract at residues A103–V153 is disordered. A compositionally biased stretch (low complexity) spans A119–Q137. The segment covering V138 to V153 has biased composition (polar residues).

This sequence belongs to the transglycosylase family. SceD subfamily.

It is found in the secreted. Is able to cleave peptidoglycan and affects clumping and separation of bacterial cells. The sequence is that of Probable transglycosylase SceD (sceD) from Staphylococcus aureus (strain COL).